Reading from the N-terminus, the 327-residue chain is MSSSPNSPIACNLPRVTIVGAGRVGSTLAQRVAEKNLADVVLLDIIAGMPQGLALDLMEARGIEIHNRQIIGTNNYADTSGSQIVVITAGLPRKPGMSRDDLLKTNAKIVVEAAKNAIAHSPNAIFIVVTNPLDVMTYLAWQATGLPRDRIMGMAGVLDSARFEAFIALELGVLPADVKAMVLGSHGDLMVPLSRYATVNGIPITELLDAATIERLIERTRNGGAEIVELMQTGGAFFAPASATSVMVESILLNQSRLLPVAAYLQGEYGLEDVVIGVPCRLGCGGIESVLELILSDEEREGLHTSAQSVRQNIERSQEILANKNNS.

NAD(+)-binding positions include 20–25 (GAGRVG) and Asp44. Residues Arg93 and Arg99 each coordinate substrate. Residues Asn106 and 129–131 (VTN) each bind NAD(+). Asn131 and Arg162 together coordinate substrate. Residue His186 is the Proton acceptor of the active site.

Belongs to the LDH/MDH superfamily. MDH type 3 family.

It catalyses the reaction (S)-malate + NAD(+) = oxaloacetate + NADH + H(+). In terms of biological role, catalyzes the reversible oxidation of malate to oxaloacetate. The chain is Malate dehydrogenase from Nostoc punctiforme (strain ATCC 29133 / PCC 73102).